Here is a 387-residue protein sequence, read N- to C-terminus: MSHRKYEAPRHGHLGFLPRKRAASVRGRVKSFPKDDQTKPVALTSFLGYKAGMSTIVRDLDRPGSKFHKREVVEAVTVVDTPPIVVVGVVGYVETPRGLRSLTTVWAEHLSDEVKRRFYKNWYKSKKKAFTKYSAKYAENGAQVDRELARIKKYASVVRVLVHTQVRKTPLSQKKAHLAEIQLNGGSVSDKVDWAKEHFEKTVAVDSVFEQNEMIDVVAVTKGHGFEGVTHRWGTKKLPRKTHRGLRKVACIGAWHPAHVMWSVARAGQRGYHHRTSINHKVYRVGKGDDEANAATEFDRTKKTITPMGGFVHYGAINNDFVILKGSIPGTRKRVVTLRKSLYTNTSRKALEEVTLKWIDTASKFGKGRFQTPAEKHAFLGTLKKDL.

It belongs to the universal ribosomal protein uL3 family.

The protein resides in the cytoplasm. The polypeptide is Large ribosomal subunit protein uL3 (RPL3) (Kluyveromyces lactis (strain ATCC 8585 / CBS 2359 / DSM 70799 / NBRC 1267 / NRRL Y-1140 / WM37) (Yeast)).